Reading from the N-terminus, the 185-residue chain is Bacteriocin UviA (185 aa).

Functionally, may have a role in bacteriocin secretion or immunity. The polypeptide is Bacteriocin UviA (uviA) (Clostridium perfringens).